The sequence spans 118 residues: Large ribosomal subunit protein bL19 (118 aa).

This sequence belongs to the bacterial ribosomal protein bL19 family.

This protein is located at the 30S-50S ribosomal subunit interface and may play a role in the structure and function of the aminoacyl-tRNA binding site. The polypeptide is Large ribosomal subunit protein bL19 (Geobacter sulfurreducens (strain ATCC 51573 / DSM 12127 / PCA)).